We begin with the raw amino-acid sequence, 78 residues long: Colicin-V immunity protein (78 aa).

Functionally, this protein is able to protect a cell, which harbors the plasmid ColV encoding colicin V, against colicin V. This is Colicin-V immunity protein (cvi) from Escherichia coli.